We begin with the raw amino-acid sequence, 338 residues long: Ferredoxin--NADP reductase (338 aa).

The FAD site is built by Asp-35, Gln-43, Tyr-48, Ala-88, Phe-122, Asp-289, and Thr-330.

This sequence belongs to the ferredoxin--NADP reductase type 2 family. As to quaternary structure, homodimer. It depends on FAD as a cofactor.

It catalyses the reaction 2 reduced [2Fe-2S]-[ferredoxin] + NADP(+) + H(+) = 2 oxidized [2Fe-2S]-[ferredoxin] + NADPH. The protein is Ferredoxin--NADP reductase of Ehrlichia chaffeensis (strain ATCC CRL-10679 / Arkansas).